The primary structure comprises 208 residues: Uracil phosphoribosyltransferase (208 aa).

Residues Arg-78, Arg-103, and 130-138 (DPMLATGGS) contribute to the 5-phospho-alpha-D-ribose 1-diphosphate site. Residues Ile-193 and 198-200 (GDA) each bind uracil. Asp-199 contributes to the 5-phospho-alpha-D-ribose 1-diphosphate binding site.

This sequence belongs to the UPRTase family. It depends on Mg(2+) as a cofactor.

The catalysed reaction is UMP + diphosphate = 5-phospho-alpha-D-ribose 1-diphosphate + uracil. It functions in the pathway pyrimidine metabolism; UMP biosynthesis via salvage pathway; UMP from uracil: step 1/1. With respect to regulation, allosterically activated by GTP. Functionally, catalyzes the conversion of uracil and 5-phospho-alpha-D-ribose 1-diphosphate (PRPP) to UMP and diphosphate. The chain is Uracil phosphoribosyltransferase from Pelobacter propionicus (strain DSM 2379 / NBRC 103807 / OttBd1).